The chain runs to 489 residues: Membrane-bound lytic murein transglycosylase F (489 aa).

The signal sequence occupies residues 1 to 32; that stretch reads MFALTAYRLRCAAWLLATGIFLLLAGCSEAKA. The non-LT domain stretch occupies residues 33–268; that stretch reads PTALERVQKE…RLKDRYYGHV (236 aa). The interval 269–489 is LT domain; sequence DVLGYVGAYT…PEEDSGDEKL (221 aa). The active site involves Glu-315. The interval 466–489 is disordered; it reads AESGLHLPGVNKTRPEEDSGDEKL. The segment covering 478 to 489 has biased composition (basic and acidic residues); the sequence is TRPEEDSGDEKL.

In the N-terminal section; belongs to the bacterial solute-binding protein 3 family. It in the C-terminal section; belongs to the transglycosylase Slt family.

It localises to the cell outer membrane. It catalyses the reaction Exolytic cleavage of the (1-&gt;4)-beta-glycosidic linkage between N-acetylmuramic acid (MurNAc) and N-acetylglucosamine (GlcNAc) residues in peptidoglycan, from either the reducing or the non-reducing ends of the peptidoglycan chains, with concomitant formation of a 1,6-anhydrobond in the MurNAc residue.. Murein-degrading enzyme that degrades murein glycan strands and insoluble, high-molecular weight murein sacculi, with the concomitant formation of a 1,6-anhydromuramoyl product. Lytic transglycosylases (LTs) play an integral role in the metabolism of the peptidoglycan (PG) sacculus. Their lytic action creates space within the PG sacculus to allow for its expansion as well as for the insertion of various structures such as secretion systems and flagella. In Pseudomonas aeruginosa (strain UCBPP-PA14), this protein is Membrane-bound lytic murein transglycosylase F.